The primary structure comprises 151 residues: Large ribosomal subunit protein bL17 (151 aa).

It belongs to the bacterial ribosomal protein bL17 family. In terms of assembly, part of the 50S ribosomal subunit. Contacts protein L32.

This chain is Large ribosomal subunit protein bL17, found in Chlorobium limicola (strain DSM 245 / NBRC 103803 / 6330).